The following is a 338-amino-acid chain: Secretory carrier-associated membrane protein 1 (338 aa).

Positions 1-64 are disordered; the sequence is MSDFDSNPFA…NVPNTQPAIM (64 aa). N-acetylserine is present on Ser2. Phosphoserine is present on Ser2. The Cytoplasmic portion of the chain corresponds to 2–155; the sequence is SDFDSNPFAD…QKTVKLMYYL (154 aa). Residue Thr45 is modified to Phosphothreonine. Residues 156–176 traverse the membrane as a helical segment; the sequence is WMFHAVTLFLNIFGCLAWFCV. The Lumenal segment spans residues 177-181; the sequence is DSARA. A helical transmembrane segment spans residues 182–202; sequence VDFGLSILWFLLFTPCSFVCW. The Cytoplasmic segment spans residues 203 to 218; that stretch reads YRPLYGAFRSDSSFRF. Residues 219–239 form a helical membrane-spanning segment; that stretch reads FVFFFVYICQFAVHVLQAAGF. The Lumenal portion of the chain corresponds to 240–261; sequence HNWGNCGWISSLTGLNQNIPVG. A helical transmembrane segment spans residues 262 to 282; that stretch reads IMMIIIAALFTASAVISLVMF. Over 283–338 the chain is Cytoplasmic; sequence KKVHGLYRTTGASFEKAQQEFATGVMSNKTVQTAAANAASTAASSAAQNAFKGNQI.

This sequence belongs to the SCAMP family. Interacts with SYNRG and ITSN1. Interacts with SLC9A7. Widely expressed, with highest expression in brain.

The protein localises to the golgi apparatus. It is found in the trans-Golgi network membrane. It localises to the recycling endosome membrane. Functions in post-Golgi recycling pathways. Acts as a recycling carrier to the cell surface. This chain is Secretory carrier-associated membrane protein 1 (SCAMP1), found in Homo sapiens (Human).